Consider the following 189-residue polypeptide: Elongation factor P (189 aa).

Belongs to the elongation factor P family.

The protein resides in the cytoplasm. The protein operates within protein biosynthesis; polypeptide chain elongation. Its function is as follows. Involved in peptide bond synthesis. Stimulates efficient translation and peptide-bond synthesis on native or reconstituted 70S ribosomes in vitro. Probably functions indirectly by altering the affinity of the ribosome for aminoacyl-tRNA, thus increasing their reactivity as acceptors for peptidyl transferase. The protein is Elongation factor P of Rhizobium rhizogenes (strain K84 / ATCC BAA-868) (Agrobacterium radiobacter).